We begin with the raw amino-acid sequence, 184 residues long: Ribulose bisphosphate carboxylase small subunit, chloroplastic 2 (184 aa).

Residues 1 to 59 (MASSMMSNAATAVAVAATSGGAQANMVAPFNGLKSIASFPVTRKSNDITSIASNGGRVQ) constitute a chloroplast transit peptide.

Belongs to the RuBisCO small chain family. In terms of assembly, heterohexadecamer of 8 large and 8 small subunits.

The protein localises to the plastid. Its subcellular location is the chloroplast. In terms of biological role, ruBisCO catalyzes two reactions: the carboxylation of D-ribulose 1,5-bisphosphate, the primary event in carbon dioxide fixation, as well as the oxidative fragmentation of the pentose substrate. Both reactions occur simultaneously and in competition at the same active site. Although the small subunit is not catalytic it is essential for maximal activity. The polypeptide is Ribulose bisphosphate carboxylase small subunit, chloroplastic 2 (Amaranthus hypochondriacus (Prince-of-Wales feather)).